Consider the following 174-residue polypeptide: Eukaryotic translation elongation factor 1 epsilon-1 (174 aa).

At alanine 2 the chain carries N-acetylalanine. Residues 2–56 form an N-terminal region; the sequence is AAAAELKLLEKSLGLRPGNKYSAQGERQIPVLQTNNGPSLTGLATIATHLVKQAS. Residues 50-173 form the GST C-terminal domain; sequence HLVKQASKEH…FIKNRLYANS (124 aa). The segment at 57-63 is linker; that stretch reads KEHLLGS. Residues 64–152 form a C-terminal region; sequence TAEEKALVQQ…SRWFCHIQHY (89 aa). Residue lysine 138 is modified to N6-acetyllysine. Positions 153 to 169 form a coiled coil; that stretch reads PDIRQHLSSVVFIKNRL.

In terms of assembly, part of a multisubunit complex that groups tRNA ligases for Arg (RARS1), Asp (DARS1), Gln (QARS1), Ile (IARS1), Leu (LARS1), Lys (KARS1), Met (MARS1) the bifunctional ligase for Glu and Pro (EPRS1) and the auxiliary subunits AIMP1/p43, AIMP2/p38 and EEF1E1/p18. Can interact simultaneously with MARS1 and EPRS1. Forms a linear complex that contains MARS1, EEF1E1, EPRS1 and AIMP2 that is at the core of the multisubunit complex. Interacts with ATM and ATR. The interaction with ATM, which takes place independently of TP53, is induced by DNA damage that may occur during genotoxic stress or cell growth. The interaction with ATR is enhanced by UV irradiation.

The protein localises to the cytoplasm. Its subcellular location is the nucleus. Functionally, positive modulator of ATM response to DNA damage. This is Eukaryotic translation elongation factor 1 epsilon-1 (EEF1E1) from Cricetulus griseus (Chinese hamster).